A 108-amino-acid chain; its full sequence is Parvalbumin beta 2 (108 aa).

Position 2 is an N-acetylserine (Ser2). EF-hand domains are found at residues 38-73 and 77-108; these read KSSDDVKKAFYVIDQDKSGFIEEDELKLFLQNFSAS and LTDAETKAFLADGDKDGDGMIGVDEFAAMIKG. Positions 51, 53, 55, 57, 59, 62, 90, 92, 94, 96, and 101 each coordinate Ca(2+).

It belongs to the parvalbumin family.

In muscle, parvalbumin is thought to be involved in relaxation after contraction. It binds two calcium ions. This is Parvalbumin beta 2 from Salmo salar (Atlantic salmon).